The sequence spans 274 residues: MAIVKCKPTSPGRRHVVKVVNPELHKGKPHAPLLEKLSKSGGRNNNGRITTRHIGGGHKQHYRLVDFKRNKDGVAAVVERLEYDPNRSANIALVLYKDGERRYILAPKGLKAGDQIQSGVDAAIKVGNALPMRNIPVGSTVHNVEMKPGKGGQIARSAGAYVQIVARDGSYVTLRLRSGEMRKVPVDCRATLGEVGNAEHMLRVLGKAGAARWRGIRPTVRGTAMNPVDHPHGGGEGKNFGKHPVTPWGVQTKGKKTRSNKRTDKFIVRRRSKK.

Positions 221 to 274 are disordered; sequence RGTAMNPVDHPHGGGEGKNFGKHPVTPWGVQTKGKKTRSNKRTDKFIVRRRSKK.

The protein belongs to the universal ribosomal protein uL2 family. In terms of assembly, part of the 50S ribosomal subunit. Forms a bridge to the 30S subunit in the 70S ribosome.

Its function is as follows. One of the primary rRNA binding proteins. Required for association of the 30S and 50S subunits to form the 70S ribosome, for tRNA binding and peptide bond formation. It has been suggested to have peptidyltransferase activity; this is somewhat controversial. Makes several contacts with the 16S rRNA in the 70S ribosome. This is Large ribosomal subunit protein uL2 from Serratia proteamaculans (strain 568).